Reading from the N-terminus, the 448-residue chain is Serine--tRNA ligase (448 aa).

246–248 is an L-serine binding site; it reads TAE. Residues 277-279 and V293 contribute to the ATP site; that span reads RKE. E300 contributes to the L-serine binding site. Position 364-367 (364-367) interacts with ATP; sequence ELAS. T399 provides a ligand contact to L-serine.

It belongs to the class-II aminoacyl-tRNA synthetase family. Type-1 seryl-tRNA synthetase subfamily. As to quaternary structure, homodimer. The tRNA molecule binds across the dimer.

The protein localises to the cytoplasm. It carries out the reaction tRNA(Ser) + L-serine + ATP = L-seryl-tRNA(Ser) + AMP + diphosphate + H(+). The catalysed reaction is tRNA(Sec) + L-serine + ATP = L-seryl-tRNA(Sec) + AMP + diphosphate + H(+). It participates in aminoacyl-tRNA biosynthesis; selenocysteinyl-tRNA(Sec) biosynthesis; L-seryl-tRNA(Sec) from L-serine and tRNA(Sec): step 1/1. Catalyzes the attachment of serine to tRNA(Ser). Is also able to aminoacylate tRNA(Sec) with serine, to form the misacylated tRNA L-seryl-tRNA(Sec), which will be further converted into selenocysteinyl-tRNA(Sec). The sequence is that of Serine--tRNA ligase from Pyrobaculum islandicum (strain DSM 4184 / JCM 9189 / GEO3).